A 263-amino-acid chain; its full sequence is Indole-3-glycerol phosphate synthase (263 aa).

The protein belongs to the TrpC family.

The enzyme catalyses 1-(2-carboxyphenylamino)-1-deoxy-D-ribulose 5-phosphate + H(+) = (1S,2R)-1-C-(indol-3-yl)glycerol 3-phosphate + CO2 + H2O. It functions in the pathway amino-acid biosynthesis; L-tryptophan biosynthesis; L-tryptophan from chorismate: step 4/5. This Acidithiobacillus ferrooxidans (strain ATCC 23270 / DSM 14882 / CIP 104768 / NCIMB 8455) (Ferrobacillus ferrooxidans (strain ATCC 23270)) protein is Indole-3-glycerol phosphate synthase.